A 364-amino-acid polypeptide reads, in one-letter code: Homeobox protein KNOX3 (364 aa).

The tract at residues 13–49 (TAHGQHHSQLPWGSSPLSAVISPPPQQQQQHQQQSAG) is disordered. Over residues 19–29 (HSQLPWGSSPL) the composition is skewed to polar residues. An ELK domain is found at 246–266 (ELKHHLLKKYSGYLSSLKQEL). Residues 267-330 (SKKKKKGKLP…NQRKRHWKPT (64 aa)) constitute a DNA-binding region (homeobox; TALE-type).

The protein belongs to the TALE/KNOX homeobox family. In terms of assembly, binds DNA as a monomer. The unit of inflorescence is the spikelet, which bears a fertile tract, the lemma, and the floret consisting of palea, two lodicules, three stamens and the pistil. The lemma is completed by the awn, an appendage homologous to the laminae of normal leaves. Expressed in the inflorescences and lemmas and at lower levels, in palea and vascular bundles.

It localises to the nucleus. May play a role in meristem formation and/or maintenance. Overexpression causes the hooded phenotype characterized by the appearance of an extra flower of inverse polarity on the lemma. Binds to the DNA sequence 5'-TGAC-3'. The protein is Homeobox protein KNOX3 (KNOX3) of Hordeum vulgare (Barley).